A 489-amino-acid chain; its full sequence is F-box/LRR-repeat protein 7 (489 aa).

Residues 1 to 31 show a composition bias toward low complexity; the sequence is MGANNGKQSGSEGKGSSSISSDLSSSTDQTS. Residues 1–76 are disordered; sequence MGANNGKQSG…AVLNGSSTSS (76 aa). Residues 32-55 show a composition bias toward polar residues; it reads TKAPKNAATSEDSDLSMRTVSTPS. Residues 64–76 are compositionally biased toward low complexity; that stretch reads SSSAVLNGSSTSS. In terms of domain architecture, F-box spans 109–155; sequence GAPVDILPDHAFLQIFTHLPTNQLCRCARVCRRWYNLAWDPRLWRTI. LRR repeat units lie at residues 168–193, 194–219, 220–245, 251–279, 280–305, 306–331, 332–357, 358–383, 384–409, 410–435, and 436–461; these read LRVL…MVSG, CRRL…EVAG, CYNV…DVSG, CISL…DMTD, CFAL…YLRR, CVRL…SVSD, CRFI…SIAH, CSRI…NARG, CEGL…DIGK, CPLV…SLKS, and CESI…NVQD.

The protein belongs to the FBXL7 family. Part of the SCF (SKP1-CUL1-F-box) E3 ubiquitin-protein ligase complex SCF(FBXL7).

It localises to the cytoplasm. Its subcellular location is the cytoskeleton. The protein resides in the microtubule organizing center. It is found in the centrosome. The protein operates within protein modification; protein ubiquitination. Functionally, substrate recognition component of a SCF (SKP1-CUL1-F-box protein) E3 ubiquitin-protein ligase complex which mediates the ubiquitination and subsequent proteasomal degradation of target proteins. This is F-box/LRR-repeat protein 7 (fbxl7) from Danio rerio (Zebrafish).